The following is a 74-amino-acid chain: MRGIYICLVFVLVCGLVSGLADVPAESEMAHLRVRRGFGCPFNQGACHRHCRSIRRRGGYCAGLIKQTCTCYRN.

The N-terminal stretch at 1–21 (MRGIYICLVFVLVCGLVSGLA) is a signal peptide. Residues 22–34 (DVPAESEMAHLRV) constitute a propeptide that is removed on maturation. 3 disulfide bridges follow: cysteine 40-cysteine 61, cysteine 47-cysteine 69, and cysteine 51-cysteine 71.

As to expression, expressed in the hemocytes, fat body and ovaries.

The protein localises to the secreted. Antibacterial peptide mostly active against Gram-positive bacteria. This is Defensin from Rhipicephalus microplus (Cattle tick).